The chain runs to 216 residues: Cell envelope integrity protein Cei (216 aa).

The chain crosses the membrane as a helical span at residues 25-45 (PAIVVVAFLVVVTCVMWTLAL).

The protein resides in the cell membrane. Contributes to cell envelope integrity and virulence. This is Cell envelope integrity protein Cei from Mycobacterium tuberculosis (strain ATCC 25618 / H37Rv).